The chain runs to 853 residues: DNA mismatch repair protein MutS (853 aa).

Position 614 to 621 (glycine 614 to serine 621) interacts with ATP.

This sequence belongs to the DNA mismatch repair MutS family.

This protein is involved in the repair of mismatches in DNA. It is possible that it carries out the mismatch recognition step. This protein has a weak ATPase activity. The protein is DNA mismatch repair protein MutS of Escherichia coli O127:H6 (strain E2348/69 / EPEC).